The chain runs to 257 residues: MSLKKSPFFELRSGSVDTLLFTVKTTDLDALRTELVKRFEATPEFFADDVVAIDVRRLADGERVALADIRQMLNDVRMRPVGVVALATQGWAGEAGLPLLEARDRRTPAAKHADEAEPAPAPVVEAAAAPAAESAQEPAPTLLHAGGRTLVIDRPLRSGQQIYAKGDLVVLAPVSHGAEIIAEGNIHIYAPLRGRALAGVHGNHDARIFCTCLEPELISIAGIYRTTENPLPAEVLGKSVQIRLEEEKLMIEPLRLT.

The protein belongs to the MinC family. As to quaternary structure, interacts with MinD and FtsZ.

Its function is as follows. Cell division inhibitor that blocks the formation of polar Z ring septums. Rapidly oscillates between the poles of the cell to destabilize FtsZ filaments that have formed before they mature into polar Z rings. Prevents FtsZ polymerization. The polypeptide is Probable septum site-determining protein MinC (Burkholderia lata (strain ATCC 17760 / DSM 23089 / LMG 22485 / NCIMB 9086 / R18194 / 383)).